The chain runs to 191 residues: MKLDVFAGQEKSELSMIEVARAILEERGRDNEMYFSDLVNEIQNYLGKSDAGIRHALPFFYTDLNTDGSFIPLGENKWGLRSWYAIDEIDEEIITLEEDEDGAQKRKKKRVNAFVDGDEDAIDYRDDDPEDEDFTEESAEVEYDEEDPDDEKSEVESYDSELNEIIPEDDFEEVDINEEDEEDEEDEEPVL.

The HTH HARE-type domain maps to 14–83; sequence LSMIEVARAI…GENKWGLRSW (70 aa). Residues 119 to 191 form a disordered region; sequence EDAIDYRDDD…EDEEDEEPVL (73 aa).

As to quaternary structure, RNAP is composed of a core of 2 alpha, a beta and a beta' subunits. The core is associated with a delta subunit and one of several sigma factors.

Functionally, participates in both the initiation and recycling phases of transcription. In the presence of the delta subunit, RNAP displays an increased specificity of transcription, a decreased affinity for nucleic acids, and an increased efficiency of RNA synthesis because of enhanced recycling. The sequence is that of Probable DNA-directed RNA polymerase subunit delta from Streptococcus pyogenes serotype M6 (strain ATCC BAA-946 / MGAS10394).